The primary structure comprises 551 residues: Chaperonin GroEL (551 aa).

ATP is bound by residues 29 to 32 (TAGP), K50, 86 to 90 (DGTTT), G417, and D499.

This sequence belongs to the chaperonin (HSP60) family. As to quaternary structure, forms a cylinder of 14 subunits composed of two heptameric rings stacked back-to-back. Interacts with the co-chaperonin GroES.

The protein localises to the cytoplasm. It catalyses the reaction ATP + H2O + a folded polypeptide = ADP + phosphate + an unfolded polypeptide.. In terms of biological role, together with its co-chaperonin GroES, plays an essential role in assisting protein folding. The GroEL-GroES system forms a nano-cage that allows encapsulation of the non-native substrate proteins and provides a physical environment optimized to promote and accelerate protein folding. The sequence is that of Chaperonin GroEL from Ehrlichia ruminantium (strain Gardel).